Consider the following 313-residue polypeptide: Postacrosomal sheath WW domain-binding protein (313 aa).

The 80-residue stretch at 8–87 (TESRRGALIP…GLMSDCTIEQ (80 aa)) folds into the GRAM domain. Repeat copies occupy residues 179 to 185 (YGPPPPG), 193 to 199 (YGTPPEG), 207 to 213 (YGAPPMG), 214 to 220 (YGAPPVG), 221 to 227 (YGVPPGG), 228 to 234 (YGVPPGG), 235 to 241 (YGVPPGG), 242 to 248 (YGAPPGG), 249 to 255 (YGVPPGG), 256 to 262 (YGAPPGG), 263 to 269 (YGAPPAG), and 270 to 276 (YGAPPAG). Residues 179 to 276 (YGPPPPGYTV…PAGYGAPPAG (98 aa)) are 12 X 7 AA tandem repeat of Y-G-X-P-P-X-G. The short motif at 183 to 186 (PPGY) is the PPxY motif 1 element. Residues 254-264 (GGYGAPPGGYG) are compositionally biased toward gly residues. A disordered region spans residues 254 to 313 (GGYGAPPGGYGAPPAGYGAPPAGNEALPPAYEAPSAGNTAASHRSMTAQQETSLPTTSSS). Residues 265 to 276 (APPAGYGAPPAG) show a composition bias toward low complexity. The PPxY motif 2 motif lies at 281 to 284 (PPAY). Positions 289–313 (AGNTAASHRSMTAQQETSLPTTSSS) are enriched in polar residues.

Expressed in testis.

Its function is as follows. May play a role in meiotic resumption and pronuclear formation, mediated by a WW domain-signaling pathway during fertilization. In Bos taurus (Bovine), this protein is Postacrosomal sheath WW domain-binding protein (WBP2NL).